The chain runs to 236 residues: Thiamine-phosphate synthase (236 aa).

4-amino-2-methyl-5-(diphosphooxymethyl)pyrimidine contacts are provided by residues 57-61 (QLRDK) and asparagine 89. 2 residues coordinate Mg(2+): aspartate 90 and aspartate 109. 4-amino-2-methyl-5-(diphosphooxymethyl)pyrimidine is bound at residue serine 128. 154 to 156 (TPS) serves as a coordination point for 2-[(2R,5Z)-2-carboxy-4-methylthiazol-5(2H)-ylidene]ethyl phosphate. Lysine 157 is a 4-amino-2-methyl-5-(diphosphooxymethyl)pyrimidine binding site. Residues glycine 185 and 205–206 (IS) each bind 2-[(2R,5Z)-2-carboxy-4-methylthiazol-5(2H)-ylidene]ethyl phosphate.

This sequence belongs to the thiamine-phosphate synthase family. Mg(2+) is required as a cofactor.

The enzyme catalyses 2-[(2R,5Z)-2-carboxy-4-methylthiazol-5(2H)-ylidene]ethyl phosphate + 4-amino-2-methyl-5-(diphosphooxymethyl)pyrimidine + 2 H(+) = thiamine phosphate + CO2 + diphosphate. The catalysed reaction is 2-(2-carboxy-4-methylthiazol-5-yl)ethyl phosphate + 4-amino-2-methyl-5-(diphosphooxymethyl)pyrimidine + 2 H(+) = thiamine phosphate + CO2 + diphosphate. It carries out the reaction 4-methyl-5-(2-phosphooxyethyl)-thiazole + 4-amino-2-methyl-5-(diphosphooxymethyl)pyrimidine + H(+) = thiamine phosphate + diphosphate. Its pathway is cofactor biosynthesis; thiamine diphosphate biosynthesis; thiamine phosphate from 4-amino-2-methyl-5-diphosphomethylpyrimidine and 4-methyl-5-(2-phosphoethyl)-thiazole: step 1/1. Functionally, condenses 4-methyl-5-(beta-hydroxyethyl)thiazole monophosphate (THZ-P) and 2-methyl-4-amino-5-hydroxymethyl pyrimidine pyrophosphate (HMP-PP) to form thiamine monophosphate (TMP). This is Thiamine-phosphate synthase from Roseiflexus sp. (strain RS-1).